A 1169-amino-acid polypeptide reads, in one-letter code: Chromosome partition protein Smc (1169 aa).

32–39 lines the ATP pocket; the sequence is PNGCGKSN. Coiled-coil stretches lie at residues 170-507 and 659-1030; these read ISKY…ALGE and REQQ…FQSL.

This sequence belongs to the SMC family. Homodimer.

The protein resides in the cytoplasm. In terms of biological role, required for chromosome condensation and partitioning. In Coxiella burnetii (strain RSA 493 / Nine Mile phase I), this protein is Chromosome partition protein Smc.